The following is a 370-amino-acid chain: Alpha-ketoglutarate-dependent xanthine dioxygenase xanA (370 aa).

H107 contacts substrate. Positions 149 and 151 each coordinate Fe cation. The 2-oxoglutarate site is built by T195 and W325. Fe cation is bound at residue H340. R352 is a binding site for 2-oxoglutarate.

This sequence belongs to the TfdA dioxygenase family. Fe(2+) is required as a cofactor. Post-translationally, glycosylated. Is subject to both N- and O-linked glycosylation. In terms of processing, phosphorylated.

Its subcellular location is the cytoplasm. It is found in the cytosol. It catalyses the reaction xanthine + 2-oxoglutarate + O2 = urate + succinate + CO2. Its activity is regulated as follows. Cu(2+) and Zn(2+) completely inhibit the xanthine dioxygenase activity, whereas Co(2+), Mn(2+), and Ni(2+) partially inhibit the activity. The inactive metal ions are presumed to compete for the Fe(2+)-binding site. N-oxalylglycine (NOG), a known inhibitor of several Fe(2+)/alpha-ketoglutarate-dependent dioxygenase family members, competes with alpha-ketoglutarate and provides a Ki of 0.12 uM for inhibition. 6,8-dihydroxypurine acts as a slow-binding competitive inhibitor. The thiol-specific inhibitors 5,5'-dithiobis(2-nitrobenzoic acid) (DTNB) and iodoacetamide, inhibit also the catalytic activity. Its function is as follows. Alpha-ketoglutarate-dependent xanthine dioxygenase is a non-heme mononuclear Fe(2+) enzyme that decarboxylates alpha-ketoglutarate to succinate and CO(2) while hydroxylating xanthine to generate uric acid. Allows xanthine utilization as a nitrogen source. Whereas xanA is highly specific for xanthine, alpha-ketoadipic acid can replace alpha-ketoglutarate as a cosubstrate. Exhibits ferroxidase activity in the absence of substrates. This is Alpha-ketoglutarate-dependent xanthine dioxygenase xanA from Emericella nidulans (Aspergillus nidulans).